We begin with the raw amino-acid sequence, 121 residues long: Replication protein A 14 kDa subunit (121 aa).

Position 2 is an N-acetylvaline (Val-2). Glycyl lysine isopeptide (Lys-Gly) (interchain with G-Cter in ubiquitin) cross-links involve residues Lys-23, Lys-39, and Lys-88.

It belongs to the replication factor A protein 3 family. As to quaternary structure, component of the canonical replication protein A complex (RPA), a heterotrimer composed of RPA1, RPA2 and RPA3. Also a component of the aRPA, the alternative replication protein A complex, a trimeric complex similar to the replication protein A complex/RPA but where RPA1 and RPA3 are associated with RPA4 instead of RPA2. Interacts with BRIP1/FANCJ via the RPA1 subunit; following DNA damage they colocalize in foci in the nucleus. Post-translationally, ubiquitinated by RFWD3 at stalled replication forks in response to DNA damage: ubiquitination by RFWD3 does not lead to degradation by the proteasome and promotes removal of the RPA complex from stalled replication forks, promoting homologous recombination.

Its subcellular location is the nucleus. In terms of biological role, as part of the heterotrimeric replication protein A complex (RPA/RP-A), binds and stabilizes single-stranded DNA intermediates that form during DNA replication or upon DNA stress. It prevents their reannealing and in parallel, recruits and activates different proteins and complexes involved in DNA metabolism. Thereby, it plays an essential role both in DNA replication and the cellular response to DNA damage. In the cellular response to DNA damage, the RPA complex controls DNA repair and DNA damage checkpoint activation. Through recruitment of ATRIP activates the ATR kinase a master regulator of the DNA damage response. It is required for the recruitment of the DNA double-strand break repair factors RAD51 and RAD52 to chromatin, in response to DNA damage. Also recruits to sites of DNA damage proteins like XPA and XPG that are involved in nucleotide excision repair and is required for this mechanism of DNA repair. Also plays a role in base excision repair (BER), probably through interaction with UNG. RPA stimulates 5'-3' helicase activity of BRIP1/FANCJ. Also recruits SMARCAL1/HARP, which is involved in replication fork restart, to sites of DNA damage. May also play a role in telomere maintenance. RPA3 has its own single-stranded DNA-binding activity and may be responsible for polarity of the binding of the complex to DNA. As part of the alternative replication protein A complex, aRPA, binds single-stranded DNA and probably plays a role in DNA repair. Compared to the RPA2-containing, canonical RPA complex, may not support chromosomal DNA replication and cell cycle progression through S-phase. The aRPA may not promote efficient priming by DNA polymerase alpha but could support DNA synthesis by polymerase delta in presence of PCNA and replication factor C (RFC), the dual incision/excision reaction of nucleotide excision repair and RAD51-dependent strand exchange. In Homo sapiens (Human), this protein is Replication protein A 14 kDa subunit (RPA3).